Consider the following 295-residue polypeptide: uncharacterized protein (295 aa).

Positions 1-19 (MHKLLLIITVFFTFNVAQA) are cleaved as a signal peptide.

This is an uncharacterized protein from Rickettsia prowazekii (strain Madrid E).